The primary structure comprises 959 residues: MGFLVMIREVSMAKAIRVVLLCVSVLWVVPKECACRSNFSRNSSSSSSSSLRPLRQRPSSVNVGALFTYDSFIGRAAKPAVKAAMDDVNADQSVLKGIKLNIIFQDSNCSGFIGTMGALQLMENKVVAAIGPQSSGIAHMISYVANELHVPLLSFGATDPTLSSLQFPYFLRTTQNDYFQMHAIADFLSYSGWRQVIAIFVDDECGRNGISVLGDVLAKKRSRISYKAAITPGADSSSIRDLLVSVNLMESRVFVVHVNPDSGLNVFSVAKSLGMMASGYVWIATDWLPTAMDSMEHVDSDTMDLLQGVVAFRHYTIESSVKRQFMARWKNLRPNDGFNSYAMYAYDSVWLVARALDVFFRENNNITFSNDPNLHKTNGSTIQLSALSVFNEGEKFMKIILGMNHTGVTGPIQFDSDRNRVNPAYEVLNLEGTAPRTVGYWSNHSGLSVVHPETLYSRPPNTSTANQRLKGIIYPGEVTKPPRGWVFPNNGKPLRIGVPNRVSYTDYVSKDKNPPGVRGYCIDVFEAAIELLPYPVPRTYILYGDGKRNPSYDNLVNEVVADNFDVAVGDITIVTNRTRYVDFTQPFIESGLVVVAPVKEAKSSPWSFLKPFTIEMWAVTGGFFLFVGAMVWILEHRFNQEFRGPPRRQLITIFWFSFSTMFFSHRENTVSSLGRFVLIIWLFVVLIINSSYTASLTSILTIRQLTSRIEGIDSLVTSNEPIGVQDGTFARNYLINELNILPSRIVPLKDEEQYLSALQRGPNAGGVAAIVDELPYIEVLLTNSNCKFRTVGQEFTRTGWGFAFQRDSPLAVDMSTAILQLSEEGELEKIHRKWLNYKHECSMQISNSEDSQLSLKSFWGLFLICGITCFMALTVFFWRVFWQYQRLLPESADEERAGEVSEPSRSGRGSRAPSFKELIKVVDKREAEIKEILKQKSSKKLKSTQSAAGTSQSQHGEIT.

The signal sequence occupies residues 1–35 (MGFLVMIREVSMAKAIRVVLLCVSVLWVVPKECAC). Topologically, residues 36–613 (RSNFSRNSSS…SPWSFLKPFT (578 aa)) are extracellular. Residues Asn-38, Asn-42, Asn-108, Asn-365, Asn-378, Asn-404, Asn-443, Asn-461, and Asn-576 are each glycosylated (N-linked (GlcNAc...) asparagine). The helical transmembrane segment at 614–634 (IEMWAVTGGFFLFVGAMVWIL) threads the bilayer. Residues 635 to 643 (EHRFNQEFR) lie on the Cytoplasmic side of the membrane. A helical membrane pass occupies residues 644 to 664 (GPPRRQLITIFWFSFSTMFFS). Over 665 to 675 (HRENTVSSLGR) the chain is Cytoplasmic. A helical transmembrane segment spans residues 676–696 (FVLIIWLFVVLIINSSYTASL). Topologically, residues 697 to 857 (TSILTIRQLT…SEDSQLSLKS (161 aa)) are extracellular. Residues 858 to 878 (FWGLFLICGITCFMALTVFFW) form a helical membrane-spanning segment. The Cytoplasmic portion of the chain corresponds to 879–959 (RVFWQYQRLL…TSQSQHGEIT (81 aa)). Disordered stretches follow at residues 893-913 (DEERAGEVSEPSRSGRGSRAP) and 936-959 (KSSKKLKSTQSAAGTSQSQHGEIT). Low complexity predominate over residues 943-959 (STQSAAGTSQSQHGEIT).

It belongs to the glutamate-gated ion channel (TC 1.A.10.1) family. Forms a heteromeric channel with GLR3.2. In terms of tissue distribution, highly expressed in roots and at lower levels in leaves and siliques. Expressed in seedlings, cotyledons, roots (e.g. root hairs, epidermis and cortex cells), stems, leaves (e.g. vascular bundles and hydathodes), and siliques. Expressed in root phloem.

Its subcellular location is the cell membrane. It localises to the plastid. It is found in the chloroplast membrane. Functionally, glutamate-gated receptor that probably acts as a non-selective cation channel, at least in hypocotyls. Can be triggered by Asn, Ser, Gly and, to a lower extent, Ala, Cys and Glu. May be involved in light-signal transduction and calcium homeostasis via the regulation of calcium influx into cells. Plays an important role in the calcium-based fast transmission of environmental stress. Acts as a negative regulator of lateral root initiation and development. May restrict primordia numbers and position along the root axis by a signaling process originating in the phloem. AtGLR3.4-mediated cytosolic calcium influx may be involved in the regulation of seed germination under salt stress by modulating sodium accumulation through the SOS pathway. This Arabidopsis thaliana (Mouse-ear cress) protein is Glutamate receptor 3.4.